Here is a 690-residue protein sequence, read N- to C-terminus: Proprotein convertase subtilisin/kexin type 9 (690 aa).

An N-terminal signal peptide occupies residues 1–28 (MGTVRSRRLWWPLPLLLLLLLGPAGARA). Residues 29-150 (QEDDDGDYEE…IEEDSYVFAQ (122 aa)) constitute a propeptide that is removed on maturation. Position 36 is a sulfotyrosine (Tyr36). Ser45 bears the Phosphoserine mark. An Inhibitor I9 domain is found at 75–147 (TYVVVLKEET…VDYIEEDSYV (73 aa)). One can recognise a Peptidase S8 domain in the interval 153–459 (PWNLERITPA…GWQLFCRTVW (307 aa)). Residues Asp184 and His224 each act as charge relay system in the active site. Cystine bridges form between Cys221–Cys253 and Cys321–Cys356. Ser384 functions as the Charge relay system in the catalytic mechanism. The interval 448 to 690 (GAGWQLFCRT…HLAQASQELQ (243 aa)) is C-terminal domain. Disulfide bonds link Cys455/Cys525, Cys475/Cys524, and Cys484/Cys507. An N-linked (GlcNAc...) asparagine glycan is attached at Asn531. Cystine bridges form between Cys532–Cys599, Cys550–Cys598, Cys560–Cys586, Cys606–Cys677, Cys624–Cys676, and Cys633–Cys652. Ser686 is modified (phosphoserine).

It belongs to the peptidase S8 family. As to quaternary structure, monomer. Can self-associate to form dimers and higher multimers which may have increased LDLR degrading activity. The precursor protein but not the mature protein may form multimers. Interacts with APOB, VLDLR, LRP8/APOER2 and BACE1. The full-length immature form (pro-PCSK9) interacts with SCNN1A, SCNN1B and SCNN1G. The pro-PCSK9 form (via C-terminal domain) interacts with LDLR. Interacts (via the C-terminal domain) with ANXA2 (via repeat Annexin 1); the interaction inhibits the degradation of LDLR. Ca(2+) serves as cofactor. Cleavage by furin and PCSK5 generates a truncated inactive protein that is unable to induce LDLR degradation. Post-translationally, undergoes autocatalytic cleavage in the endoplasmic reticulum to release the propeptide from the N-terminus and the cleavage of the propeptide is strictly required for its maturation and activation. The cleaved propeptide however remains associated with the catalytic domain through non-covalent interactions, preventing potential substrates from accessing its active site. As a result, it is secreted from cells as a propeptide-containing, enzymatically inactive protein. In terms of processing, phosphorylation protects the propeptide against proteolysis.

The protein localises to the cytoplasm. Its subcellular location is the secreted. It is found in the endosome. The protein resides in the lysosome. It localises to the cell surface. The protein localises to the endoplasmic reticulum. Its subcellular location is the golgi apparatus. With respect to regulation, its proteolytic activity is autoinhibited by the non-covalent binding of the propeptide to the catalytic domain. Inhibited by EGTA. Crucial player in the regulation of plasma cholesterol homeostasis. Binds to low-density lipid receptor family members: low density lipoprotein receptor (LDLR), very low density lipoprotein receptor (VLDLR), apolipoprotein E receptor (LRP1/APOER) and apolipoprotein receptor 2 (LRP8/APOER2), and promotes their degradation in intracellular acidic compartments. Acts via a non-proteolytic mechanism to enhance the degradation of the hepatic LDLR through a clathrin LDLRAP1/ARH-mediated pathway. May prevent the recycling of LDLR from endosomes to the cell surface or direct it to lysosomes for degradation. Can induce ubiquitination of LDLR leading to its subsequent degradation. Inhibits intracellular degradation of APOB via the autophagosome/lysosome pathway in a LDLR-independent manner. Involved in the disposal of non-acetylated intermediates of BACE1 in the early secretory pathway. Inhibits epithelial Na(+) channel (ENaC)-mediated Na(+) absorption by reducing ENaC surface expression primarily by increasing its proteasomal degradation. Regulates neuronal apoptosis via modulation of LRP8/APOER2 levels and related anti-apoptotic signaling pathways. The chain is Proprotein convertase subtilisin/kexin type 9 (PCSK9) from Lagothrix lagotricha (Brown woolly monkey).